A 218-amino-acid chain; its full sequence is UPF0758 protein SAUSA300_1608 (218 aa).

The region spanning 92-214 (KITQPSDVAD…FTSLVEAGYF (123 aa)) is the MPN domain. Zn(2+) contacts are provided by H163, H165, and D176. Residues 163–176 (HNHPSGDVTPSQED) carry the JAMM motif motif.

This sequence belongs to the UPF0758 family.

The chain is UPF0758 protein SAUSA300_1608 from Staphylococcus aureus (strain USA300).